Consider the following 157-residue polypeptide: MAGTNPRAARIAALIQRVVASSIERELHDKRLASITVTEVRVTNDLQIAKVYWTQLGHEGHEEGERKRAQQALDQAKGHLRSLVGHKAGLRLTPQLQFVFDEVPGEAHEIEDILAVAKKRDEELARARATAQYAGDADPYKHDDEPSDDFEDDSDEE.

The tract at residues 126–157 (RARATAQYAGDADPYKHDDEPSDDFEDDSDEE) is disordered. Residues 145–157 (EPSDDFEDDSDEE) are compositionally biased toward acidic residues.

This sequence belongs to the RbfA family. As to quaternary structure, monomer. Binds 30S ribosomal subunits, but not 50S ribosomal subunits or 70S ribosomes.

Its subcellular location is the cytoplasm. Its function is as follows. One of several proteins that assist in the late maturation steps of the functional core of the 30S ribosomal subunit. Associates with free 30S ribosomal subunits (but not with 30S subunits that are part of 70S ribosomes or polysomes). Required for efficient processing of 16S rRNA. May interact with the 5'-terminal helix region of 16S rRNA. The protein is Ribosome-binding factor A of Bifidobacterium longum (strain DJO10A).